The following is a 589-amino-acid chain: WD repeat-containing protein 26 homolog (589 aa).

A disordered region spans residues 1–57 (MGVVEDTEPPLKRAKRLADEPNGFSANSSVRGSSVNSNSLGDLMARPLPSQGDDETI). The span at 25-39 (SANSSVRGSSVNSNS) shows a compositional bias: low complexity. Residues 64 to 96 (RKSEFVRIITRALYSLGYDKTGAMLEEESGISL) enclose the LisH domain. Positions 97-154 (HNSTIKLFLQQVKDGKWDQSVKTLHRIGFPDEKAVKAASFLLLEQKFLEFLKVEKIAD) constitute a CTLH domain. WD repeat units follow at residues 272–311 (SHTD…HISL), 317–358 (GHHK…HMYE), 360–398 (GGIS…KECW), 401–440 (QRTQ…ERLI), 442–480 (EEDM…KIVS), 484–526 (GHKR…LIVE), and 529–569 (GHAG…QQNQ).

Interacts with RANBPM. Expressed in roots, leaves and flowers.

The protein localises to the cytoplasm. Acts as a component involved in the crosstalk regulation between light, hormone and abiotic stress response. The polypeptide is WD repeat-containing protein 26 homolog (Arabidopsis thaliana (Mouse-ear cress)).